The chain runs to 271 residues: 5-deoxy-glucuronate isomerase (271 aa).

Belongs to the isomerase IolB family.

It catalyses the reaction 5-deoxy-D-glucuronate = 5-dehydro-2-deoxy-D-gluconate. The protein operates within polyol metabolism; myo-inositol degradation into acetyl-CoA; acetyl-CoA from myo-inositol: step 4/7. In terms of biological role, involved in the isomerization of 5-deoxy-glucuronate (5DG) to 5-dehydro-2-deoxy-D-gluconate (DKG or 2-deoxy-5-keto-D-gluconate). This Bacillus subtilis (strain 168) protein is 5-deoxy-glucuronate isomerase (iolB).